The chain runs to 212 residues: MSYNDTWQPKTRLGGLVQDGEVEDMSEALDTGLPLKEPEIVDQLLPGLDDEVLDINMVQRMTDSGRRVKFRCVVAIGNRDGYVGYAEGRDDQVGGAIQKAIEVAKLNIIDVSRGCGSWECGCGRPHTVALKSTGKAGSVDVELMPAPRGLGLAGGETVQHVLELAGIDDVWTRSSGKTRTTVNFAKATFNALRETSEARVPQHAREEREVIE.

An S5 DRBM domain is found at 48–111 (LDDEVLDINM…EVAKLNIIDV (64 aa)).

This sequence belongs to the universal ribosomal protein uS5 family. In terms of assembly, part of the 30S ribosomal subunit. Contacts protein S4.

Its function is as follows. With S4 and S12 plays an important role in translational accuracy. This Halobacterium salinarum (strain ATCC 700922 / JCM 11081 / NRC-1) (Halobacterium halobium) protein is Small ribosomal subunit protein uS5.